Here is a 232-residue protein sequence, read N- to C-terminus: NAD(P)H-quinone oxidoreductase subunit K 1 (232 aa).

[4Fe-4S] cluster-binding residues include Cys-49, Cys-50, Cys-114, and Cys-145.

It belongs to the complex I 20 kDa subunit family. As to quaternary structure, NDH-1 can be composed of about 15 different subunits; different subcomplexes with different compositions have been identified which probably have different functions. The cofactor is [4Fe-4S] cluster.

It localises to the cellular thylakoid membrane. The catalysed reaction is a plastoquinone + NADH + (n+1) H(+)(in) = a plastoquinol + NAD(+) + n H(+)(out). It catalyses the reaction a plastoquinone + NADPH + (n+1) H(+)(in) = a plastoquinol + NADP(+) + n H(+)(out). Its function is as follows. NDH-1 shuttles electrons from an unknown electron donor, via FMN and iron-sulfur (Fe-S) centers, to quinones in the respiratory and/or the photosynthetic chain. The immediate electron acceptor for the enzyme in this species is believed to be plastoquinone. Couples the redox reaction to proton translocation, and thus conserves the redox energy in a proton gradient. Cyanobacterial NDH-1 also plays a role in inorganic carbon-concentration. The protein is NAD(P)H-quinone oxidoreductase subunit K 1 of Acaryochloris marina (strain MBIC 11017).